Reading from the N-terminus, the 591-residue chain is V-type ATP synthase alpha chain (591 aa).

242–249 (GPFGAGKT) provides a ligand contact to ATP.

This sequence belongs to the ATPase alpha/beta chains family.

The catalysed reaction is ATP + H2O + 4 H(+)(in) = ADP + phosphate + 5 H(+)(out). Functionally, produces ATP from ADP in the presence of a proton gradient across the membrane. The V-type alpha chain is a catalytic subunit. The sequence is that of V-type ATP synthase alpha chain from Chlamydia abortus (strain DSM 27085 / S26/3) (Chlamydophila abortus).